The primary structure comprises 258 residues: Indole-3-glycerol phosphate synthase (258 aa).

The protein belongs to the TrpC family.

It carries out the reaction 1-(2-carboxyphenylamino)-1-deoxy-D-ribulose 5-phosphate + H(+) = (1S,2R)-1-C-(indol-3-yl)glycerol 3-phosphate + CO2 + H2O. It participates in amino-acid biosynthesis; L-tryptophan biosynthesis; L-tryptophan from chorismate: step 4/5. This Chlorobium limicola (strain DSM 245 / NBRC 103803 / 6330) protein is Indole-3-glycerol phosphate synthase.